The sequence spans 178 residues: Large ribosomal subunit protein uL6 (178 aa).

Belongs to the universal ribosomal protein uL6 family. Part of the 50S ribosomal subunit.

This protein binds to the 23S rRNA, and is important in its secondary structure. It is located near the subunit interface in the base of the L7/L12 stalk, and near the tRNA binding site of the peptidyltransferase center. The chain is Large ribosomal subunit protein uL6 from Buchnera aphidicola subsp. Acyrthosiphon pisum (strain APS) (Acyrthosiphon pisum symbiotic bacterium).